An 85-amino-acid chain; its full sequence is Large ribosomal subunit protein bL27 (85 aa).

Residues 1–20 (MAHKKAGGSTRNGRDSEAKR) are disordered.

It belongs to the bacterial ribosomal protein bL27 family.

In Escherichia coli O139:H28 (strain E24377A / ETEC), this protein is Large ribosomal subunit protein bL27.